The chain runs to 500 residues: NAD(P)H-quinone oxidoreductase chain 4, chloroplastic (500 aa).

Transmembrane regions (helical) follow at residues phenylalanine 4–leucine 24, isoleucine 37–leucine 57, valine 87–valine 107, leucine 113–serine 130, leucine 134–methionine 154, phenylalanine 167–leucine 187, isoleucine 211–histidine 231, histidine 242–isoleucine 262, alanine 272–alanine 292, methionine 313–leucine 333, glutamine 334–aspartate 354, leucine 386–threonine 406, leucine 417–leucine 437, and leucine 462–valine 482.

Belongs to the complex I subunit 4 family.

It is found in the plastid. The protein resides in the chloroplast thylakoid membrane. The catalysed reaction is a plastoquinone + NADH + (n+1) H(+)(in) = a plastoquinol + NAD(+) + n H(+)(out). It catalyses the reaction a plastoquinone + NADPH + (n+1) H(+)(in) = a plastoquinol + NADP(+) + n H(+)(out). The protein is NAD(P)H-quinone oxidoreductase chain 4, chloroplastic of Agrostis stolonifera (Creeping bentgrass).